Reading from the N-terminus, the 147-residue chain is Gastrula-specific protein 17 (147 aa).

Residues 1–119 (MSQNLDFLAL…TQVYGNHQPG (119 aa)) are disordered. Polar residues-rich tracts occupy residues 20–36 (SPTSRHPSPKVWNSTPP), 45–57 (RQISPTPDQYTNP), and 74–88 (LLQNQRQSWGLSPTA).

In Xenopus laevis (African clawed frog), this protein is Gastrula-specific protein 17 (gs17).